The primary structure comprises 212 residues: Membrane-bound lytic murein transglycosylase E (212 aa).

Belongs to the transglycosylase Slt family.

The enzyme catalyses Exolytic cleavage of the (1-&gt;4)-beta-glycosidic linkage between N-acetylmuramic acid (MurNAc) and N-acetylglucosamine (GlcNAc) residues in peptidoglycan, from either the reducing or the non-reducing ends of the peptidoglycan chains, with concomitant formation of a 1,6-anhydrobond in the MurNAc residue.. In terms of biological role, murein-degrading enzyme. May play a role in recycling of muropeptides during cell elongation and/or cell division. The polypeptide is Membrane-bound lytic murein transglycosylase E (mltE) (Buchnera aphidicola subsp. Baizongia pistaciae (strain Bp)).